Consider the following 243-residue polypeptide: MGKNKQPRGQQRQGGPPAADAAGPDDMEPKKGTGAPKECGEEEPRTCCGCRFPLLLALLQLALGIAVTVVGFLMASISSSLLVRDTPFWAGIIVCLVAYLGLFMLCVSYQVDERTCIQFSMKLLYFLLSALGLTVCVLAVAFAAHHYSQLTQFTCETTLDSCQCKLPSSEPLSRTFVYRDVTDCTSVTGTFKLFLLIQMILNLVCGLVCLLACFVMWKHRYQVFYVGVRICSLTASEGPQQKI.

The interval 1 to 43 is disordered; it reads MGKNKQPRGQQRQGGPPAADAAGPDDMEPKKGTGAPKECGEEE. The Cytoplasmic portion of the chain corresponds to 1–53; the sequence is MGKNKQPRGQQRQGGPPAADAAGPDDMEPKKGTGAPKECGEEEPRTCCGCRFP. Positions 7-24 are enriched in low complexity; that stretch reads PRGQQRQGGPPAADAAGP. The chain crosses the membrane as a helical span at residues 54 to 74; that stretch reads LLLALLQLALGIAVTVVGFLM. Residues 75-86 lie on the Extracellular side of the membrane; that stretch reads ASISSSLLVRDT. A helical transmembrane segment spans residues 87-107; sequence PFWAGIIVCLVAYLGLFMLCV. Residues 108 to 122 lie on the Cytoplasmic side of the membrane; that stretch reads SYQVDERTCIQFSMK. A helical transmembrane segment spans residues 123-143; the sequence is LLYFLLSALGLTVCVLAVAFA. Residues 144–193 lie on the Extracellular side of the membrane; that stretch reads AHHYSQLTQFTCETTLDSCQCKLPSSEPLSRTFVYRDVTDCTSVTGTFKL. A helical membrane pass occupies residues 194–214; sequence FLLIQMILNLVCGLVCLLACF. The Cytoplasmic segment spans residues 215-243; sequence VMWKHRYQVFYVGVRICSLTASEGPQQKI.

In terms of tissue distribution, isoform 1 is expressed exclusively in heart and skeletal muscle. Isoform 2 is expressed in heart, skeletal muscle, thymus, prostate, testis, ovary, small intestine, colon and spleen.

The protein resides in the cell membrane. It localises to the sarcolemma. The protein localises to the postsynaptic cell membrane. Functionally, component of the dystrophin-glycoprotein complex (DGC), a complex that spans the muscle plasma membrane and forms a link between the F-actin cytoskeleton and the extracellular matrix. Preferentially associates with the sarcoglycan subcomplex of the DGC. The protein is Sarcospan (SSPN) of Homo sapiens (Human).